Here is a 440-residue protein sequence, read N- to C-terminus: Beta-1,3-galactosyl-O-glycosyl-glycoprotein beta-1,6-N-acetylglucosaminyltransferase (440 aa).

At Met1 to Lys9 the chain is on the cytoplasmic side. A helical; Signal-anchor for type II membrane protein transmembrane segment spans residues Leu10–Leu30. Topologically, residues Arg31–Leu440 are lumenal. 2 N-linked (GlcNAc...) asparagine; by host glycosylation sites follow: Asn72 and Asn108. Intrachain disulfides connect Cys73–Cys230, Cys164–Cys384, Cys185–Cys212, and Cys393–Cys425.

This sequence belongs to the glycosyltransferase 14 family.

Its subcellular location is the host Golgi apparatus membrane. The enzyme catalyses a 3-O-[beta-D-galactosyl-(1-&gt;3)-N-acetyl-alpha-D-galactosaminyl]-L-seryl-[protein] + UDP-N-acetyl-alpha-D-glucosamine = 3-O-{beta-D-galactosyl-(1-&gt;3)-[N-acetyl-beta-D-glucosaminyl-(1-&gt;6)]-N-acetyl-alpha-D-galactosaminyl}-L-seryl-[protein] + UDP + H(+). The catalysed reaction is a 3-O-[beta-D-galactosyl-(1-&gt;3)-N-acetyl-alpha-D-galactosaminyl]-L-threonyl-[protein] + UDP-N-acetyl-alpha-D-glucosamine = a 3-O-{beta-D-galactosyl-(1-&gt;3)-[N-acetyl-beta-D-glucosaminyl-(1-&gt;6)]-N-acetyl-alpha-D-galactosaminyl}-L-threonyl-[protein] + UDP + H(+). It catalyses the reaction a beta-D-Gal-(1-&gt;4)-beta-D-GlcNAc-(1-&gt;3)-beta-D-Gal-(1-&gt;4)-beta-D-GlcNAc derivative + UDP-N-acetyl-alpha-D-glucosamine = a beta-D-Gal-(1-&gt;4)-beta-D-GlcNAc-(1-&gt;3)-[beta-D-GlcNAc-(1-&gt;6)]-beta-D-Gal-(1-&gt;4)-N-acetyl-beta-D-glucosaminyl derivative + UDP + H(+). It carries out the reaction 3-O-[N-acetyl-beta-D-glucosaminyl-(1-&gt;3)-N-acetyl-alpha-D-galactosaminyl]-L-seryl-[protein] + UDP-N-acetyl-alpha-D-glucosamine = 3-O-[N-acetyl-beta-D-glucosaminyl-(1-&gt;3)-[N-acetyl-beta-D-glucosaminyl-(1-&gt;6)]-N-acetyl-alpha-D-galactosaminyl]-L-seryl-[protein] + UDP + H(+). The enzyme catalyses a 3-O-[N-acetyl-beta-D-glucosaminyl-(1-&gt;3)-N-acetyl-alpha-D-galactosaminyl]-L-threonyl-[protein] + UDP-N-acetyl-alpha-D-glucosamine = 3-O-[N-acetyl-beta-D-glucosaminyl-(1-&gt;3)-[N-acetyl-beta-D-glucosaminyl-(1-&gt;6)]-N-acetyl-alpha-D-galactosaminyl]-L-threonyl-[protein] + UDP + H(+). It participates in protein modification; protein glycosylation. Its function is as follows. Non-essential glycosyltransferase that can synthesize all known mucin beta 6 N-acetylglucosaminides. Mediates core 2 and core 4 O-glycan branching, 2 important steps in mucin-type biosynthesis. Has also I-branching enzyme activity by converting linear into branched poly-N-acetyllactosaminoglycans. Contributes to the post-translational modifications of structural proteins. The sequence is that of Beta-1,3-galactosyl-O-glycosyl-glycoprotein beta-1,6-N-acetylglucosaminyltransferase (Bo17) from Bovine herpesvirus 4 (strain LVR140) (BoHV-4).